The primary structure comprises 141 residues: Large ribosomal subunit protein uL16 (141 aa).

The protein belongs to the universal ribosomal protein uL16 family. Part of the 50S ribosomal subunit.

Functionally, binds 23S rRNA and is also seen to make contacts with the A and possibly P site tRNAs. This Hydrogenobaculum sp. (strain Y04AAS1) protein is Large ribosomal subunit protein uL16.